The following is a 198-amino-acid chain: Chromophore lyase CpcS/CpeS 2 (198 aa).

This sequence belongs to the CpcS/CpeS biliprotein lyase family.

It localises to the plastid. It is found in the organellar chromatophore. Covalently attaches a chromophore to Cys residue(s) of phycobiliproteins. The protein is Chromophore lyase CpcS/CpeS 2 of Paulinella chromatophora.